The primary structure comprises 335 residues: Biotin synthase (335 aa).

In terms of domain architecture, Radical SAM core spans 47 to 276; sequence FYGKKVKLNM…SKEIRISGGR (230 aa). [4Fe-4S] cluster is bound by residues Cys-65, Cys-69, and Cys-72. [2Fe-2S] cluster-binding residues include Cys-109, Cys-141, Cys-201, and Arg-271.

This sequence belongs to the radical SAM superfamily. Biotin synthase family. As to quaternary structure, homodimer. It depends on [4Fe-4S] cluster as a cofactor. The cofactor is [2Fe-2S] cluster.

It carries out the reaction (4R,5S)-dethiobiotin + (sulfur carrier)-SH + 2 reduced [2Fe-2S]-[ferredoxin] + 2 S-adenosyl-L-methionine = (sulfur carrier)-H + biotin + 2 5'-deoxyadenosine + 2 L-methionine + 2 oxidized [2Fe-2S]-[ferredoxin]. Its pathway is cofactor biosynthesis; biotin biosynthesis; biotin from 7,8-diaminononanoate: step 2/2. In terms of biological role, catalyzes the conversion of dethiobiotin (DTB) to biotin by the insertion of a sulfur atom into dethiobiotin via a radical-based mechanism. The sequence is that of Biotin synthase from Bacillus subtilis subsp. natto.